We begin with the raw amino-acid sequence, 407 residues long: Cathepsin D (407 aa).

The first 20 residues, 1 to 20 (MQTPGVLLLILGLLDASSSA), serve as a signal peptide directing secretion. The propeptide at 21–64 (LIRIPLRKFTSIRRTMTEVGGSVEDLILKGPITKYSMQSSPRTK) is activation peptide. One can recognise a Peptidase A1 domain in the interval 79-402 (YYGEIGIGTP…DREYNRVGFA (324 aa)). 2 disulfide bridges follow: Cys-91–Cys-160 and Cys-110–Cys-117. Asp-97 is an active-site residue. 2 N-linked (GlcNAc...) asparagine glycosylation sites follow: Asn-134 and Asn-258. Cys-281 and Cys-285 form a disulfide bridge. The active site involves Asp-290. A disulfide bridge links Cys-324 with Cys-361.

Belongs to the peptidase A1 family. Occurs as a mixture of both a single chain form and two types of two chain (light and heavy) forms. Interacts with ADAM30; this leads to activation of CTSD. In terms of processing, N- and O-glycosylated. Post-translationally, undergoes proteolytic cleavage and activation by ADAM30.

The protein resides in the lysosome. It localises to the melanosome. The protein localises to the secreted. Its subcellular location is the extracellular space. The enzyme catalyses Specificity similar to, but narrower than, that of pepsin A. Does not cleave the 4-Gln-|-His-5 bond in B chain of insulin.. Functionally, acid protease active in intracellular protein breakdown. Plays a role in APP processing following cleavage and activation by ADAM30 which leads to APP degradation. The protein is Cathepsin D (Ctsd) of Rattus norvegicus (Rat).